Consider the following 184-residue polypeptide: TATA-box-binding protein (184 aa).

2 consecutive repeat copies span residues 9 to 85 (IENI…IDKL) and 100 to 178 (VQNI…KKEL).

The protein belongs to the TBP family.

General factor that plays a role in the activation of archaeal genes transcribed by RNA polymerase. Binds specifically to the TATA box promoter element which lies close to the position of transcription initiation. This chain is TATA-box-binding protein, found in Thermoplasma volcanium (strain ATCC 51530 / DSM 4299 / JCM 9571 / NBRC 15438 / GSS1).